Reading from the N-terminus, the 359-residue chain is Phospho-N-acetylmuramoyl-pentapeptide-transferase (359 aa).

Transmembrane regions (helical) follow at residues 3 to 23 (QILI…PALI), 55 to 75 (VAII…GLAF), 80 to 100 (ISAS…VGFL), 117 to 137 (TAKT…ALGF), 156 to 176 (IATV…VVSA), 187 to 207 (LDGL…LITF), 231 to 251 (LAIV…WNAA), 255 to 275 (IFMG…ISVT), 280 to 300 (ILAV…VLQI), and 334 to 354 (FWLL…GEWL).

It belongs to the glycosyltransferase 4 family. MraY subfamily. Mg(2+) is required as a cofactor.

Its subcellular location is the cell membrane. It catalyses the reaction UDP-N-acetyl-alpha-D-muramoyl-L-alanyl-gamma-D-glutamyl-meso-2,6-diaminopimeloyl-D-alanyl-D-alanine + di-trans,octa-cis-undecaprenyl phosphate = di-trans,octa-cis-undecaprenyl diphospho-N-acetyl-alpha-D-muramoyl-L-alanyl-D-glutamyl-meso-2,6-diaminopimeloyl-D-alanyl-D-alanine + UMP. It participates in cell wall biogenesis; peptidoglycan biosynthesis. In terms of biological role, catalyzes the initial step of the lipid cycle reactions in the biosynthesis of the cell wall peptidoglycan: transfers peptidoglycan precursor phospho-MurNAc-pentapeptide from UDP-MurNAc-pentapeptide onto the lipid carrier undecaprenyl phosphate, yielding undecaprenyl-pyrophosphoryl-MurNAc-pentapeptide, known as lipid I. This is Phospho-N-acetylmuramoyl-pentapeptide-transferase from Mycolicibacterium paratuberculosis (strain ATCC BAA-968 / K-10) (Mycobacterium paratuberculosis).